Consider the following 116-residue polypeptide: Spexin (116 aa).

The first 26 residues, 1 to 26, serve as a signal peptide directing secretion; the sequence is MKGPSILAVAALALLLVLSVLENSSG. A propeptide spanning residues 27–35 is cleaved from the precursor; the sequence is APQRLSEKR. Glutamine amide is present on Gln49. 2 consecutive propeptides follow at residues 50-116 and 74-116; these read GHRF…RFYW and PNLQ…RFYW. A compositionally biased stretch (basic and acidic residues) spans 56-73; the sequence is DQSRRKELADRPPPERRN. The segment at 56 to 75 is disordered; it reads DQSRRKELADRPPPERRNPN.

The protein belongs to the spexin family. In terms of tissue distribution, widely expressed; predominantly expressed in epithelial cells in the skin, respiratory, digestive, urinary and reproductive systems, retina, adrenal gland and various brain regions. In the adrenal gland, expressed in parenchymal cells of the cortex and in ganglionic cells and intermingled cortical cells of the medulla. Expressed in the type I glomic cells within the carotid body (at protein level). Widely expressed. Strongly expressed in esophagus, liver, pancreas, kidney, brain, hypothalamus, thyroid and ovary. Expressed in the zona glomerulosa (ZG) and zona fasciculata/reticularis (ZF/R) of the adrenal gland. Also expressed in stomach, lung, skeletal muscle, heart, uterus, spleen, adrenal gland and testis. Weakly expressed in small intestine, thymus, urinary bladder and adenohypophysis. In the brain, is expressed in the Barrington's nucleus, with lesser amount in the ventrolateral caudal periaqueductal gray (PAG) and in the mesopontine tegmentum.

The protein localises to the secreted. It is found in the extracellular space. The protein resides in the cytoplasmic vesicle. Its subcellular location is the secretory vesicle. Functionally, plays a role as a central modulator of cardiovascular and renal function and nociception. Also plays a role in energy metabolism and storage. Inhibits adrenocortical cell proliferation with minor stimulation on corticosteroid release. Its function is as follows. Acts as a ligand for galanin receptors GALR2 and GALR3. Intracerebroventricular administration of the peptide induces an increase in arterial blood pressure, a decrease in both heart rate and renal excretion and delayed natriuresis. Intraventricular administration of the peptide induces antinociceptive activity. Intraperitoneal administration of the peptide induces a reduction in food consumption and body weight. Inhibits long chain fatty acid uptake into adipocytes. Also induces contraction of muscarinic-like stomach smooth muscles. Intracerebroventricular administration of the peptide induces a decrease in heart rate, but no change in arterial pressure, and an increase in urine flow rate. Intraventricular administration of the peptide induces antinociceptive activity. The sequence is that of Spexin (SPX) from Rattus norvegicus (Rat).